Consider the following 456-residue polypeptide: tRNA modification GTPase MnmE (456 aa).

Arg-21, Glu-85, and Lys-124 together coordinate (6S)-5-formyl-5,6,7,8-tetrahydrofolate. One can recognise a TrmE-type G domain in the interval 220–379 (QFRIVLYGEP…LLDAIKERTG (160 aa)). Position 230 (Asn-230) interacts with K(+). GTP is bound by residues 230–235 (NTGKSS), 249–255 (SEIPGTT), and 274–277 (DTAG). Ser-234 provides a ligand contact to Mg(2+). K(+) contacts are provided by Ser-249, Ile-251, and Thr-254. Thr-255 is a binding site for Mg(2+). Residue Lys-456 participates in (6S)-5-formyl-5,6,7,8-tetrahydrofolate binding.

Belongs to the TRAFAC class TrmE-Era-EngA-EngB-Septin-like GTPase superfamily. TrmE GTPase family. In terms of assembly, homodimer. Heterotetramer of two MnmE and two MnmG subunits. K(+) is required as a cofactor.

The protein localises to the cytoplasm. In terms of biological role, exhibits a very high intrinsic GTPase hydrolysis rate. Involved in the addition of a carboxymethylaminomethyl (cmnm) group at the wobble position (U34) of certain tRNAs, forming tRNA-cmnm(5)s(2)U34. In Leptospira interrogans serogroup Icterohaemorrhagiae serovar copenhageni (strain Fiocruz L1-130), this protein is tRNA modification GTPase MnmE.